A 1331-amino-acid chain; its full sequence is Retrotransposon-like protein 1 (1331 aa).

Disordered regions lie at residues 1 to 123, 128 to 147, 556 to 595, and 971 to 1033; these read MMEP…SQED, TDLA…SSTV, EADE…ETFY, and PSSE…DEPN. Residues 19 to 30 show a composition bias toward low complexity; it reads SSKQMESSEGSS. Acidic residues-rich tracts occupy residues 109–123, 128–143, and 569–578; these read EMEE…SQED, TDLA…EEPD, and GSDDLSESEP. The span at 992-1001 shows a compositional bias: low complexity; sequence RRVATTTRPT. Residues 1015–1024 show a composition bias toward acidic residues; it reads PESEDEEESE. Transmembrane regions (helical) follow at residues 1070 to 1090 and 1117 to 1137; these read FYRS…LVML and LFLD…TQLF. The disordered stretch occupies residues 1309–1331; sequence SPPREGATLEELPSDADEDAGLD. A compositionally biased stretch (acidic residues) spans 1320 to 1331; that stretch reads LPSDADEDAGLD.

It localises to the membrane. In terms of biological role, plays an essential role in capillaries endothelial cells for the maintenance of feto-maternal interface and for development of the placenta. This Bos taurus (Bovine) protein is Retrotransposon-like protein 1 (RTL1).